We begin with the raw amino-acid sequence, 765 residues long: Polyadenylate-binding protein, cytoplasmic and nuclear (765 aa).

The segment covering 1 to 37 (MSADASTTPAADSNVTSTPETSTTPAAPAPEVTAVES) has biased composition (low complexity). Residues 1 to 49 (MSADASTTPAADSNVTSTPETSTTPAAPAPEVTAVESTTAPNASQPHSA) form a disordered region. A compositionally biased stretch (polar residues) spans 38–48 (TTAPNASQPHS). RRM domains are found at residues 49-127 (ASLY…WSQR), 137-214 (GNVF…HHIS), 230-307 (TNVY…RAQK), and 333-470 (VNLY…LAQR). Disordered regions lie at residues 364-427 (VMRD…ADKK) and 619-657 (PGYGQGRGGVPVQQGQMRPGQGGRGQNAAQAPAGRPEEA). Positions 377–427 (ESDKEKENKEATKENEKESSEAEKAEKTEEKPADSGDEKKEDKESKKADKK) are enriched in basic and acidic residues. Positions 628–637 (VPVQQGQMRP) are enriched in low complexity. A PABC domain is found at 659–736 (AGGLTAQALS…ALNVYDEYMK (78 aa)). The tract at residues 737–765 (NKGGESEATGEAAKPKEAAKETSTEENKS) is disordered. Over residues 749-765 (AKPKEAAKETSTEENKS) the composition is skewed to basic and acidic residues.

This sequence belongs to the polyadenylate-binding protein type-1 family.

The protein resides in the cytoplasm. The protein localises to the nucleus. In terms of biological role, binds the poly(A) tail of mRNA. Appears to be an important mediator of the multiple roles of the poly(A) tail in mRNA biogenesis, stability and translation. In the nucleus, involved in both mRNA cleavage and polyadenylation. Is also required for efficient mRNA export to the cytoplasm. Acts in concert with a poly(A)-specific nuclease (PAN) to affect poly(A) tail shortening, which may occur concomitantly with either nucleocytoplasmic mRNA transport or translational initiation. In the cytoplasm, stimulates translation initiation and regulates mRNA decay through translation termination-coupled poly(A) shortening, probably mediated by PAN. This Aspergillus oryzae (strain ATCC 42149 / RIB 40) (Yellow koji mold) protein is Polyadenylate-binding protein, cytoplasmic and nuclear (pab1).